Consider the following 367-residue polypeptide: Peptide chain release factor 2 (367 aa).

An N5-methylglutamine modification is found at Gln254.

Belongs to the prokaryotic/mitochondrial release factor family. In terms of processing, methylated by PrmC. Methylation increases the termination efficiency of RF2.

The protein resides in the cytoplasm. Peptide chain release factor 2 directs the termination of translation in response to the peptide chain termination codons UGA and UAA. This Janthinobacterium sp. (strain Marseille) (Minibacterium massiliensis) protein is Peptide chain release factor 2.